The following is a 126-amino-acid chain: Glycine cleavage system H protein (126 aa).

Residues 22–103 enclose the Lipoyl-binding domain; it reads KAYIGITDYA…PYGSWMALVE (82 aa). The residue at position 63 (lysine 63) is an N6-lipoyllysine.

Belongs to the GcvH family. In terms of assembly, the glycine cleavage system is composed of four proteins: P, T, L and H. It depends on (R)-lipoate as a cofactor.

The glycine cleavage system catalyzes the degradation of glycine. The H protein shuttles the methylamine group of glycine from the P protein to the T protein. This Thermoanaerobacter pseudethanolicus (strain ATCC 33223 / 39E) (Clostridium thermohydrosulfuricum) protein is Glycine cleavage system H protein.